The following is a 402-amino-acid chain: MGAIISRWKTKPSTVELLESLDKDIKDLEEFRAKNQRLLKLWVGRLLFYSSALYLLTCLCVYYLYFPQQWGARLITALPLLAFPALVLLLRKMLIFLFSKRTERNNDKLEDLKTQKRKILEEVMETETYKNAKLILERFDPESKKKAEAEATPVRPHMTPRPGQELRQRHIAMATPGPVLGPMSPGTTPLRTAPGGPPEKGLAGSASTPAGASQAETPQQMMRRSMNPYSPGPGSGMRPPGPPLARPILPRERGAVDRVIEYLVGDGPQNRYALICQQCFSHNGMALKEEFEFVAFRCAYCYFMNPARKTRPQAPRLPEFSFERRLRSESPETQSSAATETPEDSDAPEDDMERTTSADPQNPAADEAPVLQESETEESQPQDVPHAEAEALEEQKKEDESN.

Topologically, residues 1 to 45 (MGAIISRWKTKPSTVELLESLDKDIKDLEEFRAKNQRLLKLWVGR) are cytoplasmic. The helical transmembrane segment at 46-66 (LLFYSSALYLLTCLCVYYLYF) threads the bilayer. The Lumenal portion of the chain corresponds to 67–77 (PQQWGARLITA). A helical membrane pass occupies residues 78–98 (LPLLAFPALVLLLRKMLIFLF). Residues 99–402 (SKRTERNNDK…EEQKKEDESN (304 aa)) lie on the Cytoplasmic side of the membrane. Positions 100 to 128 (KRTERNNDKLEDLKTQKRKILEEVMETET) form a coiled coil. The segment at 142-240 (ESKKKAEAEA…PGPGSGMRPP (99 aa)) is disordered. Residues 205–222 (SASTPAGASQAETPQQMM) are compositionally biased toward polar residues. Residues 276–301 (CQQCFSHNGMALKEEFEFVAFRCAYC) form a C4-type; plays a role in ER morphology zinc finger. Residues 311 to 402 (RPQAPRLPEF…EEQKKEDESN (92 aa)) are disordered. Residues 321–330 (SFERRLRSES) are compositionally biased toward basic and acidic residues. Residues 341–352 (TPEDSDAPEDDM) show a composition bias toward acidic residues. Positions 385–402 (PHAEAEALEEQKKEDESN) are enriched in basic and acidic residues.

The protein belongs to the lunapark family. As to quaternary structure, homodimer; homodimerization requires the C4-type zinc finger motif and decreases during mitosis in a phosphorylation-dependent manner. Phosphorylated. Phosphorylation occurs during interphase. Phosphorylation also occurs during mitosis; these phosphorylations reduce both its homodimerization and the ER three-way tubular junction formation.

The protein localises to the endoplasmic reticulum membrane. In terms of biological role, endoplasmic reticulum (ER)-shaping membrane protein that plays a role in determining ER morphology. Involved in the stabilization of nascent three-way ER tubular junctions within the ER network. May also play a role as a curvature-stabilizing protein within three-way ER tubular junction network. This Danio rerio (Zebrafish) protein is Endoplasmic reticulum junction formation protein lunapark-B (lnpkb).